The primary structure comprises 110 residues: Large ribosomal subunit protein uL22 (110 aa).

Belongs to the universal ribosomal protein uL22 family. As to quaternary structure, part of the 50S ribosomal subunit.

This protein binds specifically to 23S rRNA; its binding is stimulated by other ribosomal proteins, e.g. L4, L17, and L20. It is important during the early stages of 50S assembly. It makes multiple contacts with different domains of the 23S rRNA in the assembled 50S subunit and ribosome. In terms of biological role, the globular domain of the protein is located near the polypeptide exit tunnel on the outside of the subunit, while an extended beta-hairpin is found that lines the wall of the exit tunnel in the center of the 70S ribosome. The protein is Large ribosomal subunit protein uL22 of Shewanella frigidimarina (strain NCIMB 400).